The sequence spans 153 residues: Small ribosomal subunit protein uS15 (153 aa).

This sequence belongs to the universal ribosomal protein uS15 family. In terms of assembly, part of the 30S ribosomal subunit.

This is Small ribosomal subunit protein uS15 from Sulfolobus acidocaldarius (strain ATCC 33909 / DSM 639 / JCM 8929 / NBRC 15157 / NCIMB 11770).